Here is a 376-residue protein sequence, read N- to C-terminus: MWLILFMIVIGAVIGGVTNSLAIKMLFRPYSEKRIGRFRLPFTPGLIPKRHDELATQLGRMVVSYLVTSVGIGKKLTEASFTDSVTEWAKRESRKFLSSDQSLSSILHQNFQVEDSEKLVLQQVERWLETSYDRWFREANSRTIGMALPEVIVEKVERNLPAIRRMLLTKARDYVASDQGKAQLSVMIDRFLETHGTLGNMVSMFFSNERLVDKLHPELLKFLNDQETEKWLQKLLDNEWERLKEKPLADIQQYVEKEAVVRIGRQVLQTQVPVIQWLGKPLHAWTGPYEEKVAEEWVPKLVHVTIQLLVSQLDHMLERLHLEEIVREQVSAFSVERLEELVLSISRKEFKMITYLGALLGGGIGLVQSLIILLIK.

The next 2 membrane-spanning stretches (helical) occupy residues Leu3 to Ile23 and Tyr355 to Ile375.

This sequence belongs to the UPF0754 family.

Its subcellular location is the cell membrane. The sequence is that of UPF0754 membrane protein BH1148 from Halalkalibacterium halodurans (strain ATCC BAA-125 / DSM 18197 / FERM 7344 / JCM 9153 / C-125) (Bacillus halodurans).